The primary structure comprises 726 residues: Sister chromatid cohesion protein SCC4 (726 aa).

TPR repeat units lie at residues 7–40 (AEGLWGLADHHQKLGEIGKTIKCLEAICQSQISF), 88–121 (FQNYSLLSHCYHLLASFPPQRNLLVKALELASSV), 132–165 (CNFNSQLANTFIIQADFPSSLSALESGFLSASHI), 229–262 (RLRLCDYKNAQHHVDRLDQAMNAHSHKMQEIQQL), 443–477 (PTILQASECMIEMLRGQYSHSVGCYSEAAFHCIEA), 531–564 (ASILFAYGLLLMKQRDLQEARNRLAKGLQIAHNH), and 572–605 (AQYLTLLGNLALSLHDTVQAREILRSSLTLAKKL). The interval 697–726 (SVGIEGPSPAPSSSRLVGLDTGKRWGKRRM) is disordered.

It belongs to the SCC4/mau-2 family. In terms of assembly, interacts with SCC2 to form the cohesin loading complex. Expressed ubiquitously.

The protein resides in the nucleus. Its subcellular location is the cytoplasm. Its function is as follows. Essential protein required for cell fate determination during embryogenesis. Involved in sister chromatid cohesion. Forms a complex with SCC2, which is required for the association of the cohesin complex with chromosomes. The sequence is that of Sister chromatid cohesion protein SCC4 from Arabidopsis thaliana (Mouse-ear cress).